Consider the following 666-residue polypeptide: Nuclear distribution protein nudE homolog 1 (666 aa).

Residues 14-195 (EEEIAHYREK…KDQLARAIAT (182 aa)) are a coiled coil. 4 disordered regions span residues 40–64 (EFQQ…KQQA), 220–310 (DDIN…SGIP), 369–388 (KRVT…PAPH), and 397–666 (DHNT…KVKK). The segment covering 251 to 274 (RSGTMSSIPVASPSTKRFSQQIPH) has biased composition (polar residues). Composition is skewed to low complexity over residues 275 to 287 (SPSF…STTS) and 372 to 383 (TSTTSTTSSTTT). Positions 400–410 (TTPTAQSQQFP) are enriched in polar residues. 3 stretches are compositionally biased toward low complexity: residues 449–465 (PTFR…LPSR), 473–485 (ASGS…SGTA), and 536–554 (SATP…STSN). 2 stretches are compositionally biased toward polar residues: residues 587–599 (RQSL…TPTT) and 614–638 (SSLS…SGRP).

This sequence belongs to the nudE family. In terms of assembly, self-associates. Interacts with PAC1.

The protein localises to the cytoplasm. The protein resides in the cytoskeleton. Its function is as follows. Required for nuclear migration. The chain is Nuclear distribution protein nudE homolog 1 (NDE1) from Cryptococcus neoformans var. neoformans serotype D (strain JEC21 / ATCC MYA-565) (Filobasidiella neoformans).